A 70-amino-acid polypeptide reads, in one-letter code: Enhancer of split m6 protein (70 aa).

This is Enhancer of split m6 protein from Drosophila melanogaster (Fruit fly).